A 242-amino-acid chain; its full sequence is uncharacterized protein (242 aa).

NADP(+) is bound at residue 8-15; it reads TGASGGIG. S137 lines the substrate pocket. The active-site Proton acceptor is the Y150.

It belongs to the short-chain dehydrogenases/reductases (SDR) family.

This is an uncharacterized protein from Bacillus subtilis (strain 168).